The following is a 466-amino-acid chain: Na(+)/H(+) antiporter NhaA (466 aa).

Helical transmembrane passes span 32–52 (VGGV…NVPA), 74–94 (LSVQ…VAGI), 111–131 (AALP…VYTL), 142–162 (GWAV…AVIG), 172–192 (FLLT…AVFF), 195–215 (DLNF…WLLL), 221–241 (GWYV…NSGI), 280–300 (GLAV…GGAL), 310–330 (LGVV…GTWL), 348–368 (VFAV…IGEL), and 379–399 (EVKA…TTLL).

This sequence belongs to the NhaA Na(+)/H(+) (TC 2.A.33) antiporter family.

The protein localises to the cell membrane. The catalysed reaction is Na(+)(in) + 2 H(+)(out) = Na(+)(out) + 2 H(+)(in). Functionally, na(+)/H(+) antiporter that extrudes sodium in exchange for external protons. In Streptomyces avermitilis (strain ATCC 31267 / DSM 46492 / JCM 5070 / NBRC 14893 / NCIMB 12804 / NRRL 8165 / MA-4680), this protein is Na(+)/H(+) antiporter NhaA.